The chain runs to 139 residues: D-ribose pyranase (139 aa).

The active-site Proton donor is histidine 20. Substrate-binding positions include aspartate 28, histidine 106, and 128–130; that span reads YAN.

This sequence belongs to the RbsD / FucU family. RbsD subfamily. As to quaternary structure, homodecamer.

Its subcellular location is the cytoplasm. It catalyses the reaction beta-D-ribopyranose = beta-D-ribofuranose. It participates in carbohydrate metabolism; D-ribose degradation; D-ribose 5-phosphate from beta-D-ribopyranose: step 1/2. In terms of biological role, catalyzes the interconversion of beta-pyran and beta-furan forms of D-ribose. The chain is D-ribose pyranase from Salmonella typhi.